A 109-amino-acid polypeptide reads, in one-letter code: uncharacterized protein (109 aa).

The chain crosses the membrane as a helical span at residues 26–48 (VTSIMTVSDINYLLLYLIILLTL).

It localises to the membrane. This is an uncharacterized protein from Saccharomyces cerevisiae (strain ATCC 204508 / S288c) (Baker's yeast).